The sequence spans 642 residues: Threonine--tRNA ligase (642 aa).

In terms of domain architecture, TGS spans 1-61 (MPIITLPDGS…SEDANLEIIT (61 aa)). Positions 243 to 534 (DHRKIGKALN…ITEEYAGFFP (292 aa)) are catalytic. Zn(2+) is bound by residues C334, H385, and H511.

It belongs to the class-II aminoacyl-tRNA synthetase family. Homodimer. The cofactor is Zn(2+).

It localises to the cytoplasm. The enzyme catalyses tRNA(Thr) + L-threonine + ATP = L-threonyl-tRNA(Thr) + AMP + diphosphate + H(+). Functionally, catalyzes the attachment of threonine to tRNA(Thr) in a two-step reaction: L-threonine is first activated by ATP to form Thr-AMP and then transferred to the acceptor end of tRNA(Thr). Also edits incorrectly charged L-seryl-tRNA(Thr). The protein is Threonine--tRNA ligase of Histophilus somni (strain 2336) (Haemophilus somnus).